The sequence spans 1022 residues: Probable E3 ubiquitin-protein ligase HERC6 (1022 aa).

RCC1 repeat units lie at residues 41–92, 93–145, 147–198, 200–253, and 254–304; these read NHRV…AVCH, KGRV…ALSK, SQVF…ALSL, GTSF…VLTQ, and DGKV…AYVH. The 325-residue stretch at 693-1017 folds into the HECT domain; sequence EATDFCKVLV…INNNRGFVSP (325 aa). Cysteine 985 acts as the Glycyl thioester intermediate in catalysis.

In terms of tissue distribution, detected in brain, heart, placenta and testis.

Its subcellular location is the cytoplasm. It localises to the cytosol. The catalysed reaction is S-ubiquitinyl-[E2 ubiquitin-conjugating enzyme]-L-cysteine + [acceptor protein]-L-lysine = [E2 ubiquitin-conjugating enzyme]-L-cysteine + N(6)-ubiquitinyl-[acceptor protein]-L-lysine.. It functions in the pathway protein modification; protein ubiquitination. E3 ubiquitin-protein ligase which accepts ubiquitin from an E2 ubiquitin-conjugating enzyme in the form of a thioester and then directly transfers the ubiquitin to targeted substrates. This chain is Probable E3 ubiquitin-protein ligase HERC6 (HERC6), found in Homo sapiens (Human).